We begin with the raw amino-acid sequence, 152 residues long: Xanthine-guanine phosphoribosyltransferase (152 aa).

Residues 37-38 (RG), Arg69, and 88-96 (DDLVDTGGT) contribute to the 5-phospho-alpha-D-ribose 1-diphosphate site. Position 69 (Arg69) interacts with GMP. Asp89 is a Mg(2+) binding site. The guanine site is built by Asp92 and Ile135. Xanthine is bound by residues Asp92 and Ile135. GMP-binding positions include 92-96 (DTGGT) and 134-135 (WI).

This sequence belongs to the purine/pyrimidine phosphoribosyltransferase family. XGPT subfamily. Homotetramer. Mg(2+) is required as a cofactor.

It is found in the cell inner membrane. It carries out the reaction GMP + diphosphate = guanine + 5-phospho-alpha-D-ribose 1-diphosphate. The enzyme catalyses XMP + diphosphate = xanthine + 5-phospho-alpha-D-ribose 1-diphosphate. It catalyses the reaction IMP + diphosphate = hypoxanthine + 5-phospho-alpha-D-ribose 1-diphosphate. The protein operates within purine metabolism; GMP biosynthesis via salvage pathway; GMP from guanine: step 1/1. It functions in the pathway purine metabolism; XMP biosynthesis via salvage pathway; XMP from xanthine: step 1/1. Functionally, purine salvage pathway enzyme that catalyzes the transfer of the ribosyl-5-phosphate group from 5-phospho-alpha-D-ribose 1-diphosphate (PRPP) to the N9 position of the 6-oxopurines guanine and xanthine to form the corresponding ribonucleotides GMP (guanosine 5'-monophosphate) and XMP (xanthosine 5'-monophosphate), with the release of PPi. To a lesser extent, also acts on hypoxanthine. The protein is Xanthine-guanine phosphoribosyltransferase of Erwinia tasmaniensis (strain DSM 17950 / CFBP 7177 / CIP 109463 / NCPPB 4357 / Et1/99).